Here is a 442-residue protein sequence, read N- to C-terminus: Cation channel sperm-associated protein 4 (442 aa).

Residues 1-66 (MSEKHKWWQQ…TQMYIKQLLR (66 aa)) are Cytoplasmic-facing. The chain crosses the membrane as a helical span at residues 67 to 88 (HPAFQLLLAFLLLSNAITIALR). Residues 89–98 (TNSYLGQKHY) lie on the Extracellular side of the membrane. A helical membrane pass occupies residues 99-125 (ELFSTIDDIVLTILICEVLLGWLNGFW). Residues 126 to 129 (IFWK) lie on the Cytoplasmic side of the membrane. A helical membrane pass occupies residues 130–153 (DGWNILNFAIVFILFMGFFIKQLD). At 154–156 (MVA) the chain is on the extracellular side. Residues 157–175 (ITYPLRVLRLVHVCMAVEP) form a helical membrane-spanning segment. Residues 176 to 188 (LARIIKVILQSMP) are Cytoplasmic-facing. The chain crosses the membrane as a helical span at residues 189–212 (DLANVMALILFFMLVFSVFGVTLF). Residues 213 to 222 (GAFVPKHFQN) are Extracellular-facing. An intramembrane region (helical; Pore-forming) is located at residues 223–234 (MGVALYTLFICI). Residues 235 to 255 (TQDGWLDIYTDFQMDEREYAM) lie on the Extracellular side of the membrane. The chain crosses the membrane as a helical span at residues 256 to 283 (EVGGAIYFAVFITLGAFIGLNLFVVVVT). The Cytoplasmic portion of the chain corresponds to 284 to 442 (TNLEQMMKTG…NMVNKHKFSH (159 aa)).

Belongs to the cation channel sperm-associated (TC 1.A.1.19) family. In terms of assembly, component of the CatSper complex or CatSpermasome composed of the core pore-forming members CATSPER1, CATSPER2, CATSPER3 and CATSPER4 as well as auxiliary members CATSPERB, CATSPERG2, CATSPERD, CATSPERE, CATSPERZ, C2CD6/CATSPERT, SLCO6C1, TMEM249, TMEM262 and EFCAB9. HSPA1 may be an additional auxiliary complex member. The core complex members CATSPER1, CATSPER2, CATSPER3 and CATSPER4 form a heterotetrameric channel. The auxiliary CATSPERB, CATSPERG2, CATSPERD and CATSPERE subunits form a pavilion-like structure over the pore which stabilizes the complex through interactions with CATSPER4, CATSPER3, CATSPER1 and CATSPER2 respectively. SLCO6C1 interacts with CATSPERE and TMEM262/CATSPERH interacts with CATSPERB, further stabilizing the complex. C2CD6/CATSPERT interacts at least with CATSPERD and is required for targeting the CatSper complex in the flagellar membrane. As to expression, testis-specific.

It localises to the cell projection. It is found in the cilium. Its subcellular location is the flagellum membrane. The enzyme catalyses Ca(2+)(in) = Ca(2+)(out). Its activity is regulated as follows. In contrast to the human ortholog, not activated by progesterone. Activated by intracellular alkalinization. In terms of biological role, pore-forming subunit of the CatSper complex, a sperm-specific voltage-gated calcium channel that plays a central role in sperm cell hyperactivation. Controls calcium entry to mediate the hyperactivated motility, a step needed for sperm motility which is essential late in the preparation of sperm for fertilization. The protein is Cation channel sperm-associated protein 4 (Catsper4) of Mus musculus (Mouse).